A 220-amino-acid polypeptide reads, in one-letter code: Protein GrpE (220 aa).

The interval 1–22 (MSDEKNKFTDASFENCDLKNPS) is disordered.

The protein belongs to the GrpE family. In terms of assembly, homodimer.

Its subcellular location is the cytoplasm. Functionally, participates actively in the response to hyperosmotic and heat shock by preventing the aggregation of stress-denatured proteins, in association with DnaK and GrpE. It is the nucleotide exchange factor for DnaK and may function as a thermosensor. Unfolded proteins bind initially to DnaJ; upon interaction with the DnaJ-bound protein, DnaK hydrolyzes its bound ATP, resulting in the formation of a stable complex. GrpE releases ADP from DnaK; ATP binding to DnaK triggers the release of the substrate protein, thus completing the reaction cycle. Several rounds of ATP-dependent interactions between DnaJ, DnaK and GrpE are required for fully efficient folding. The chain is Protein GrpE from Bartonella henselae (strain ATCC 49882 / DSM 28221 / CCUG 30454 / Houston 1) (Rochalimaea henselae).